The following is a 394-amino-acid chain: Chalcone synthase 8 (394 aa).

Cys165 is an active-site residue.

This sequence belongs to the thiolase-like superfamily. Chalcone/stilbene synthases family.

It carries out the reaction (E)-4-coumaroyl-CoA + 3 malonyl-CoA + 3 H(+) = 2',4,4',6'-tetrahydroxychalcone + 3 CO2 + 4 CoA. It functions in the pathway secondary metabolite biosynthesis; flavonoid biosynthesis. The primary product of this enzyme is 4,2',4',6'-tetrahydroxychalcone (also termed naringenin-chalcone or chalcone) which can under specific conditions spontaneously isomerize into naringenin. This is Chalcone synthase 8 (CHS8) from Bromheadia finlaysoniana (Orchid).